Consider the following 232-residue polypeptide: UPF0758 protein Amet_2289 (232 aa).

Residues 110–232 (RIKSPDDVSN…YYSLKEKSMM (123 aa)) form the MPN domain. His-181, His-183, and Asp-194 together coordinate Zn(2+). The short motif at 181–194 (HNHPSGDPSPSGED) is the JAMM motif element.

This sequence belongs to the UPF0758 family.

The protein is UPF0758 protein Amet_2289 of Alkaliphilus metalliredigens (strain QYMF).